The primary structure comprises 154 residues: 6,7-dimethyl-8-ribityllumazine synthase (154 aa).

5-amino-6-(D-ribitylamino)uracil-binding positions include F22, 56–58, and 81–83; these read SFE and VLI. 86 to 87 provides a ligand contact to (2S)-2-hydroxy-3-oxobutyl phosphate; that stretch reads ET. H89 (proton donor) is an active-site residue. F114 is a 5-amino-6-(D-ribitylamino)uracil binding site. R128 serves as a coordination point for (2S)-2-hydroxy-3-oxobutyl phosphate.

Belongs to the DMRL synthase family.

It carries out the reaction (2S)-2-hydroxy-3-oxobutyl phosphate + 5-amino-6-(D-ribitylamino)uracil = 6,7-dimethyl-8-(1-D-ribityl)lumazine + phosphate + 2 H2O + H(+). It functions in the pathway cofactor biosynthesis; riboflavin biosynthesis; riboflavin from 2-hydroxy-3-oxobutyl phosphate and 5-amino-6-(D-ribitylamino)uracil: step 1/2. Functionally, catalyzes the formation of 6,7-dimethyl-8-ribityllumazine by condensation of 5-amino-6-(D-ribitylamino)uracil with 3,4-dihydroxy-2-butanone 4-phosphate. This is the penultimate step in the biosynthesis of riboflavin. The protein is 6,7-dimethyl-8-ribityllumazine synthase of Chlamydia caviae (strain ATCC VR-813 / DSM 19441 / 03DC25 / GPIC) (Chlamydophila caviae).